A 370-amino-acid chain; its full sequence is Aminomethyltransferase (370 aa).

It belongs to the GcvT family. In terms of assembly, the glycine cleavage system is composed of four proteins: P, T, L and H.

The enzyme catalyses N(6)-[(R)-S(8)-aminomethyldihydrolipoyl]-L-lysyl-[protein] + (6S)-5,6,7,8-tetrahydrofolate = N(6)-[(R)-dihydrolipoyl]-L-lysyl-[protein] + (6R)-5,10-methylene-5,6,7,8-tetrahydrofolate + NH4(+). Functionally, the glycine cleavage system catalyzes the degradation of glycine. The chain is Aminomethyltransferase from Clostridium botulinum (strain Kyoto / Type A2).